A 542-amino-acid chain; its full sequence is CTP synthase (542 aa).

Residues 1–265 (MARYVFITGG…DSEVLAAFGI (265 aa)) form an amidoligase domain region. S13 is a CTP binding site. Residue S13 coordinates UTP. Residues 14 to 19 (SLGKGI) and D71 contribute to the ATP site. Mg(2+) contacts are provided by D71 and E139. Residues 146-148 (DIE), 186-191 (KTKPTQ), and K222 contribute to the CTP site. UTP contacts are provided by residues 186–191 (KTKPTQ) and K222. Positions 291–541 (TIAIVGKYTG…VEAAVEQSRL (251 aa)) constitute a Glutamine amidotransferase type-1 domain. G353 is an L-glutamine binding site. C380 functions as the Nucleophile; for glutamine hydrolysis in the catalytic mechanism. Residues 381–384 (FGMQ), E404, and R469 contribute to the L-glutamine site. Active-site residues include H514 and E516.

The protein belongs to the CTP synthase family. As to quaternary structure, homotetramer.

It catalyses the reaction UTP + L-glutamine + ATP + H2O = CTP + L-glutamate + ADP + phosphate + 2 H(+). The enzyme catalyses L-glutamine + H2O = L-glutamate + NH4(+). The catalysed reaction is UTP + NH4(+) + ATP = CTP + ADP + phosphate + 2 H(+). Its pathway is pyrimidine metabolism; CTP biosynthesis via de novo pathway; CTP from UDP: step 2/2. Its activity is regulated as follows. Allosterically activated by GTP, when glutamine is the substrate; GTP has no effect on the reaction when ammonia is the substrate. The allosteric effector GTP functions by stabilizing the protein conformation that binds the tetrahedral intermediate(s) formed during glutamine hydrolysis. Inhibited by the product CTP, via allosteric rather than competitive inhibition. In terms of biological role, catalyzes the ATP-dependent amination of UTP to CTP with either L-glutamine or ammonia as the source of nitrogen. Regulates intracellular CTP levels through interactions with the four ribonucleotide triphosphates. The polypeptide is CTP synthase (Agrobacterium fabrum (strain C58 / ATCC 33970) (Agrobacterium tumefaciens (strain C58))).